We begin with the raw amino-acid sequence, 847 residues long: MDIRNEFLQFFHNKGHAVYPSMPLVPNDATLLFTNAGMVQFKDIFTGIVPRPSIPRATSSQLCMRAGGKHNDLENVGYTARHHTLFEMLGNFSFGDYFKEEAILFAWEFVTKNLGFKSKDLYISVHEKDDEAVKLWEKFVPFERIKKMGDKDNFWQMGDSGPCGPCSEIYIDQGEKHFKGSEDYFGGEGDRFLEIWNLVFMQYERSNDGVLSPLPKPSIDTGMGLERVQALLEHKLNNFDSSLFAPLMEEISDLASLDYASEFQPSFRVVADHARAVAFLLAQGVHFNKEGRGYVLRRILRRALRHGYLMGLKEAFLYKVVGVVCEQFSNTHAYLKESKEMVMKECFEEEERFLETLESGMELFNLSLEHLNENKIFDGKIAFKLYDTFGFPLDLTNDMLRSHGACVDMQGFESCMQEQVKRSKASWKGKQNNADFSAILNAYAPNVFVGYETTECCAKVLGFFDSDFKEITDAKPNQEVWVLLEKTPFYAEGGGAIGDRGALLKDDEEAAIVLDTKNFFGLNFSLLEIKKALKKGDQVIAQVSDERLEIAKHHSATHLLQSALREVLGSHVSQAGSLVESKRLRFDFSHPKALNDEELEKVEDLVNAQIFKHLNSQVEHMPLNQAKDKGALALFSEKYAENVRVVSFKEASIELCGGIHVENTGLIGGFRIVKESGVSSGVRRIEAVCGKAFYQLAKEENKELKNAKIALKNNDVIAGINKLKESVKNSQKAPVSVELPVEKIHGVNLVVGVVEQGDIKEMIDRLKSKHERLLAMVFKKENERITLACGVKNAPIKANVWANEVAQILGGKGGGRGDFASAGGRDIENLQAALNLAKNTALKALEG.

Residues histidine 554, histidine 558, cysteine 656, and histidine 660 each coordinate Zn(2+).

This sequence belongs to the class-II aminoacyl-tRNA synthetase family. Requires Zn(2+) as cofactor.

The protein localises to the cytoplasm. The catalysed reaction is tRNA(Ala) + L-alanine + ATP = L-alanyl-tRNA(Ala) + AMP + diphosphate. Its function is as follows. Catalyzes the attachment of alanine to tRNA(Ala) in a two-step reaction: alanine is first activated by ATP to form Ala-AMP and then transferred to the acceptor end of tRNA(Ala). Also edits incorrectly charged Ser-tRNA(Ala) and Gly-tRNA(Ala) via its editing domain. The sequence is that of Alanine--tRNA ligase from Helicobacter pylori (strain Shi470).